A 228-amino-acid chain; its full sequence is Gliolectin (228 aa).

The Cytoplasmic segment spans residues 1-120 (MLCPPMALGP…NPKAVSQAPR (120 aa)). The helical; Signal-anchor for type II membrane protein transmembrane segment at 121–137 (GMALTPAQISASAKLIL) threads the bilayer. Residues 138–228 (QKCPESDRKK…GTSELADQKQ (91 aa)) lie on the Extracellular side of the membrane. The interval 141-228 (PESDRKKSNG…GTSELADQKQ (88 aa)) is disordered. Residues Asn149, Asn156, Asn198, Asn199, Asn205, and Asn218 are each glycosylated (N-linked (GlcNAc...) asparagine). Residues 195-213 (NNNNNSSSSNNNSNMNINN) are compositionally biased toward low complexity. Residues 218 to 228 (NGTSELADQKQ) show a composition bias toward polar residues.

In terms of tissue distribution, expressed by a subset of glial cells found at the midline of the embryo stage 12 nervous system. Expression is highest during the formation of the embryonic axonal commissures, a process requiring midline glial cell function (at protein level).

The protein resides in the membrane. Has a role in intercellular carbohydrate-mediated cell adhesion. The sequence is that of Gliolectin from Drosophila melanogaster (Fruit fly).